We begin with the raw amino-acid sequence, 758 residues long: POU domain, class 2, transcription factor 1 (758 aa).

Composition is skewed to polar residues over residues 1–10 (MKLHSSSKIQ), 19–30 (RMNNPSETSKSP), and 275–285 (VQQLPQSQTTP). 5 disordered regions span residues 1 to 43 (MKLH…QTNG), 271 to 296 (AATP…LEEP), 377 to 398 (TNQS…RRKK), 450 to 472 (EKRI…LFSS), and 534 to 573 (SVLT…MTSS). One can recognise a POU-specific domain in the interval 294–368 (EEPSDLEELE…LLEKWLNDAE (75 aa)). The homeobox DNA-binding region spans 395–454 (RRKKRTSIETNIRVALEKSFLENQKPTSEEITMIADQLNMEKEVIRVWFCNRRQKEKRIN). Residues 455-472 (PPSSGGSSSSPIKSLFSS) are compositionally biased toward low complexity.

Belongs to the POU transcription factor family. Class-2 subfamily. In terms of tissue distribution, expressed in oocytes (at protein level). Expressed in the tadpole brain (at protein level).

The protein resides in the cytoplasm. The protein localises to the nucleus. In terms of biological role, transcription factor that binds to the octamer motif (5'-ATTTGCAT-3') and activates the promoters of the genes of some small nuclear RNAs (snRNA) and histone H2B. In vitro does not bind to variant octamer sequences, such as the H2B octamer 5'-GTTTGCAT-3', although binding has been observed in vivo during early embryogenesis, suggesting that interactions between pou2f1 and other factors might be required for octamer-dependent H2B transcription. Acts downstream of Notch signaling during radial glia formation. May be important for gastrulation, possibly through the regulation of an FGF-type signaling pathway. The polypeptide is POU domain, class 2, transcription factor 1 (pou2f1) (Xenopus laevis (African clawed frog)).